The primary structure comprises 265 residues: Undecaprenyl-diphosphatase (265 aa).

A run of 7 helical transmembrane segments spans residues 38 to 58, 75 to 95, 108 to 128, 135 to 155, 181 to 201, 215 to 235, and 244 to 264; these read RSDF…CLAL, RDYV…GLIV, PVAW…HFAG, VVTW…GVFP, FVFM…LLEM, VAVA…WLLG, and VFAV…PAAA.

The protein belongs to the UppP family.

It is found in the cell inner membrane. It catalyses the reaction di-trans,octa-cis-undecaprenyl diphosphate + H2O = di-trans,octa-cis-undecaprenyl phosphate + phosphate + H(+). In terms of biological role, catalyzes the dephosphorylation of undecaprenyl diphosphate (UPP). Confers resistance to bacitracin. In Xanthomonas euvesicatoria pv. vesicatoria (strain 85-10) (Xanthomonas campestris pv. vesicatoria), this protein is Undecaprenyl-diphosphatase.